The following is a 135-amino-acid chain: Lactoylglutathione lyase (135 aa).

Residues Gln2–Asn126 form the VOC domain. Position 5 (His5) interacts with Ni(2+). Arg9 contacts substrate. Residue Glu56 coordinates Ni(2+). Substrate is bound by residues Asn60 and His74. Ni(2+) contacts are provided by His74 and Glu122. Glu122 acts as the Proton donor/acceptor in catalysis.

Belongs to the glyoxalase I family. In terms of assembly, homodimer. Ni(2+) is required as a cofactor.

The enzyme catalyses (R)-S-lactoylglutathione = methylglyoxal + glutathione. Its pathway is secondary metabolite metabolism; methylglyoxal degradation; (R)-lactate from methylglyoxal: step 1/2. In terms of biological role, catalyzes the conversion of hemimercaptal, formed from methylglyoxal and glutathione, to S-lactoylglutathione. The sequence is that of Lactoylglutathione lyase (gloA) from Haemophilus influenzae (strain ATCC 51907 / DSM 11121 / KW20 / Rd).